The chain runs to 93 residues: Cobalt transport protein CbiN (93 aa).

The next 2 helical transmembrane spans lie at 5–25 (LILLAMVIALVILPFFIDHGG) and 62–82 (SLLFTLQGSLGAAVIFYILGY).

The protein belongs to the CbiN family. In terms of assembly, forms an energy-coupling factor (ECF) transporter complex composed of an ATP-binding protein (A component, CbiO), a transmembrane protein (T component, CbiQ) and 2 possible substrate-capture proteins (S components, CbiM and CbiN) of unknown stoichimetry.

The protein localises to the cell inner membrane. The protein operates within cofactor biosynthesis; adenosylcobalamin biosynthesis. Part of the energy-coupling factor (ECF) transporter complex CbiMNOQ involved in cobalt import. The chain is Cobalt transport protein CbiN from Citrobacter koseri (strain ATCC BAA-895 / CDC 4225-83 / SGSC4696).